Consider the following 316-residue polypeptide: Glutamyl-Q tRNA(Asp) synthetase (316 aa).

L-glutamate-binding positions include 13–17 and Asp49; that span reads RFAPS. The 'HIGH' region signature appears at 16–26; sequence PSPSGDLHFGS. Zn(2+) is bound by residues Cys105, Cys107, Tyr119, and Cys123. Residues Tyr176 and Arg194 each coordinate L-glutamate. The short motif at 232–236 is the 'KMSKS' region element; sequence KLSKQ. Lys235 contacts ATP.

Belongs to the class-I aminoacyl-tRNA synthetase family. GluQ subfamily. Zn(2+) serves as cofactor.

In terms of biological role, catalyzes the tRNA-independent activation of glutamate in presence of ATP and the subsequent transfer of glutamate onto a tRNA(Asp). Glutamate is transferred on the 2-amino-5-(4,5-dihydroxy-2-cyclopenten-1-yl) moiety of the queuosine in the wobble position of the QUC anticodon. The protein is Glutamyl-Q tRNA(Asp) synthetase of Photorhabdus laumondii subsp. laumondii (strain DSM 15139 / CIP 105565 / TT01) (Photorhabdus luminescens subsp. laumondii).